A 1375-amino-acid chain; its full sequence is Capping protein, Arp2/3 and myosin-I linker protein 3 (1375 aa).

The tract at residues 124-151 (IRRGNADTPEGPRDTSPNSETSTSTTHS) is disordered. The span at 138–151 (TSPNSETSTSTTHS) shows a compositional bias: low complexity. LRR repeat units follow at residues 244 to 264 (SLEE…QKLA), 274 to 295 (VLHA…SLSQ), 303 to 323 (GLTK…QALG), 335 to 357 (SLRY…NALY), 365 to 386 (ALVH…GALL), 392 to 413 (HLTY…EAPP), 424 to 444 (TLSH…RALL), 455 to 475 (DLHL…ALQE), 482 to 501 (CIGS…LTLV), and 509 to 530 (SLKH…EEIL). 2 disordered regions span residues 864-901 (RTLS…GTNI) and 969-1375 (KLRH…PGTD). Positions 981–997 (PRTTPPGPGRPSVPVPG) are enriched in pro residues. Residues 1007–1022 (RLDEGLEDFFSRRVMD) are compositionally biased toward basic and acidic residues. A compositionally biased stretch (basic residues) spans 1047–1062 (QKKRRRGLFHFRRPRS). Positions 1078–1097 (LPPPPPPPPTQESPPSPDPP) are enriched in pro residues. Residues 1098–1108 (SLGNNSSPCWS) show a composition bias toward low complexity. The span at 1219–1229 (RRAEATWHIAE) shows a compositional bias: basic and acidic residues. Polar residues predominate over residues 1233 to 1244 (ANHSCQSPSPAS). Positions 1272-1281 (PIGPRPPKPV) are enriched in pro residues. Residues 1348–1360 (QSCDKLEPDRRQP) are compositionally biased toward basic and acidic residues.

The protein belongs to the CARMIL family.

Its subcellular location is the cytoplasm. It is found in the cell membrane. This Mus musculus (Mouse) protein is Capping protein, Arp2/3 and myosin-I linker protein 3 (Carmil3).